Consider the following 122-residue polypeptide: Double-headed protease inhibitor, submandibular gland (122 aa).

Kazal-like domains lie at 10–70 (GGRK…ECDI) and 71–121 (ECTQ…QCQS). Cystine bridges form between cysteine 16/cysteine 50, cysteine 28/cysteine 47, cysteine 36/cysteine 68, cysteine 72/cysteine 101, cysteine 79/cysteine 98, and cysteine 87/cysteine 119.

The protein localises to the secreted. Functionally, this inhibitor is composed of two homologous actively inhibiting halves: one which inhibits trypsin, the other which inhibits elastase. The chain is Double-headed protease inhibitor, submandibular gland from Panthera uncia (Snow leopard).